A 366-amino-acid polypeptide reads, in one-letter code: Short-chain collagen C4 (366 aa).

Residues 1 to 14 (DTGPQGPQGVAGPP) show a composition bias toward low complexity. 2 triple-helical region regions span residues 1 to 23 (DTGPQGPQGVAGPPGIDGAKGDK) and 40 to 210 (GPPG…NGAV). The segment at 1–207 (DTGPQGPQGV…QGPQGAPGSN (207 aa)) is disordered. Residues 28-45 (YPPPPTCPTCPAGPPGAP) are compositionally biased toward pro residues. Low complexity-rich tracts occupy residues 75-90 (PGNDGQPGAPGAPGYD) and 99-110 (TGAPGPQGPKGD). Over residues 138-149 (DGQDGAKGDKGD) the composition is skewed to basic and acidic residues. 2 stretches are compositionally biased toward low complexity: residues 150–168 (QGPAGTPGAPGKDGAQGPA) and 189–201 (QGPKGDVGPQGPQ).

It is found in the secreted. The protein localises to the extracellular space. It localises to the extracellular matrix. This Ephydatia muelleri (Mueller's freshwater sponge) protein is Short-chain collagen C4.